We begin with the raw amino-acid sequence, 379 residues long: 3-isopropylmalate dehydrogenase 1 (379 aa).

R101, R111, R139, and D230 together coordinate substrate. D230, D254, and D258 together coordinate Mg(2+). Position 293–305 (293–305 (GSAPDIAGKGIAN)) interacts with NAD(+).

The protein belongs to the isocitrate and isopropylmalate dehydrogenases family. LeuB type 1 subfamily. As to quaternary structure, homodimer. Mg(2+) is required as a cofactor. It depends on Mn(2+) as a cofactor.

The protein localises to the cytoplasm. The catalysed reaction is (2R,3S)-3-isopropylmalate + NAD(+) = 4-methyl-2-oxopentanoate + CO2 + NADH. It participates in amino-acid biosynthesis; L-leucine biosynthesis; L-leucine from 3-methyl-2-oxobutanoate: step 3/4. In terms of biological role, catalyzes the oxidation of 3-carboxy-2-hydroxy-4-methylpentanoate (3-isopropylmalate) to 3-carboxy-4-methyl-2-oxopentanoate. The product decarboxylates to 4-methyl-2 oxopentanoate. The sequence is that of 3-isopropylmalate dehydrogenase 1 from Bradyrhizobium diazoefficiens (strain JCM 10833 / BCRC 13528 / IAM 13628 / NBRC 14792 / USDA 110).